The chain runs to 250 residues: Phosphoribosylaminoimidazole-succinocarboxamide synthase (250 aa).

This sequence belongs to the SAICAR synthetase family.

The catalysed reaction is 5-amino-1-(5-phospho-D-ribosyl)imidazole-4-carboxylate + L-aspartate + ATP = (2S)-2-[5-amino-1-(5-phospho-beta-D-ribosyl)imidazole-4-carboxamido]succinate + ADP + phosphate + 2 H(+). Its pathway is purine metabolism; IMP biosynthesis via de novo pathway; 5-amino-1-(5-phospho-D-ribosyl)imidazole-4-carboxamide from 5-amino-1-(5-phospho-D-ribosyl)imidazole-4-carboxylate: step 1/2. This Parasynechococcus marenigrum (strain WH8102) protein is Phosphoribosylaminoimidazole-succinocarboxamide synthase.